The sequence spans 316 residues: Ribonuclease Z (316 aa).

Zn(2+) contacts are provided by H61, H63, D65, H66, H152, D220, and H279. D65 serves as the catalytic Proton acceptor.

The protein belongs to the RNase Z family. Homodimer. Requires Zn(2+) as cofactor.

It carries out the reaction Endonucleolytic cleavage of RNA, removing extra 3' nucleotides from tRNA precursor, generating 3' termini of tRNAs. A 3'-hydroxy group is left at the tRNA terminus and a 5'-phosphoryl group is left at the trailer molecule.. Zinc phosphodiesterase, which displays some tRNA 3'-processing endonuclease activity. Probably involved in tRNA maturation, by removing a 3'-trailer from precursor tRNA. This chain is Ribonuclease Z, found in Clostridium perfringens (strain ATCC 13124 / DSM 756 / JCM 1290 / NCIMB 6125 / NCTC 8237 / Type A).